Here is a 294-residue protein sequence, read N- to C-terminus: 4-hydroxy-tetrahydrodipicolinate synthase (294 aa).

Thr-44 is a binding site for pyruvate. Catalysis depends on Tyr-132, which acts as the Proton donor/acceptor. Lys-161 functions as the Schiff-base intermediate with substrate in the catalytic mechanism. Ile-206 contributes to the pyruvate binding site.

It belongs to the DapA family. In terms of assembly, homotetramer; dimer of dimers.

The protein localises to the cytoplasm. It carries out the reaction L-aspartate 4-semialdehyde + pyruvate = (2S,4S)-4-hydroxy-2,3,4,5-tetrahydrodipicolinate + H2O + H(+). Its pathway is amino-acid biosynthesis; L-lysine biosynthesis via DAP pathway; (S)-tetrahydrodipicolinate from L-aspartate: step 3/4. Catalyzes the condensation of (S)-aspartate-beta-semialdehyde [(S)-ASA] and pyruvate to 4-hydroxy-tetrahydrodipicolinate (HTPA). The polypeptide is 4-hydroxy-tetrahydrodipicolinate synthase (Thermotoga petrophila (strain ATCC BAA-488 / DSM 13995 / JCM 10881 / RKU-1)).